The chain runs to 89 residues: Small ribosomal subunit protein bS20 (89 aa).

The segment at 1–22 (MANTASARKRIRQNERRRERNV) is disordered. Positions 12–22 (RQNERRRERNV) are enriched in basic and acidic residues.

Belongs to the bacterial ribosomal protein bS20 family.

Binds directly to 16S ribosomal RNA. This chain is Small ribosomal subunit protein bS20, found in Gluconobacter oxydans (strain 621H) (Gluconobacter suboxydans).